Here is a 686-residue protein sequence, read N- to C-terminus: Translation initiation factor IF-2 (686 aa).

The disordered stretch occupies residues 61-98 (FEVEEKVVRSKKNSNKKKKKGKGNEDKRQENFAGRQQT). Residues 69 to 81 (RSKKNSNKKKKKG) are compositionally biased toward basic residues. The region spanning 188 to 357 (ERPAVVTIMG…LLVSEVEEYK (170 aa)) is the tr-type G domain. The G1 stretch occupies residues 197 to 204 (GHVDHGKT). 197 to 204 (GHVDHGKT) contacts GTP. The G2 stretch occupies residues 222-226 (GITQH). The tract at residues 243–246 (DTPG) is G3. GTP-binding positions include 243–247 (DTPGH) and 297–300 (NKMD). A G4 region spans residues 297 to 300 (NKMD). Residues 333-335 (SAI) form a G5 region.

Belongs to the TRAFAC class translation factor GTPase superfamily. Classic translation factor GTPase family. IF-2 subfamily.

It is found in the cytoplasm. Functionally, one of the essential components for the initiation of protein synthesis. Protects formylmethionyl-tRNA from spontaneous hydrolysis and promotes its binding to the 30S ribosomal subunits. Also involved in the hydrolysis of GTP during the formation of the 70S ribosomal complex. The protein is Translation initiation factor IF-2 of Bacillus cereus (strain B4264).